The following is a 723-amino-acid chain: Polyribonucleotide nucleotidyltransferase (723 aa).

Residues Asp-488 and Asp-494 each contribute to the Mg(2+) site. The KH domain occupies 555 to 614 (PKIITLNIKPEKIKDVIGPGGKQINAIIEETGVKIDIEQDGTVYIASQDQAMNRKAIAII). An S1 motif domain is found at 624–692 (GEVYTGKVRR…HQGRVNLSRK (69 aa)). Residues 692 to 723 (KALLEKKEQPEGDKKPQAEKKFYPKTKKPESK) form a disordered region. Residues 693–723 (ALLEKKEQPEGDKKPQAEKKFYPKTKKPESK) show a composition bias toward basic and acidic residues.

Belongs to the polyribonucleotide nucleotidyltransferase family. It depends on Mg(2+) as a cofactor.

It localises to the cytoplasm. The catalysed reaction is RNA(n+1) + phosphate = RNA(n) + a ribonucleoside 5'-diphosphate. Functionally, involved in mRNA degradation. Catalyzes the phosphorolysis of single-stranded polyribonucleotides processively in the 3'- to 5'-direction. This chain is Polyribonucleotide nucleotidyltransferase, found in Listeria welshimeri serovar 6b (strain ATCC 35897 / DSM 20650 / CCUG 15529 / CIP 8149 / NCTC 11857 / SLCC 5334 / V8).